The primary structure comprises 332 residues: MTHDHAHSRGVPAMIKEIFAPHSHDAADSVDDTLESTAAGIRTVKISLLVLGLTALIQIVIVVMSGSVALAADTIHNFADALTAVPLWIAFALGAKPATRRYTYGFGRVEDLAGSFVVAMITMSAIIAGYEAIARLIHPQQIEHVGWVALAGLVGFIGNEWVALYRIRVGHRIGSAALIADGLHARTDGFTSLAVLCSAGGVALGFPLADPIVGLLITAAILAVLRTAARDVFRRLLDGVDPAMVDAAEQALAARPGVQAVRSVRMRWIGHRLHADAELDVDPALDLAQAHRIAHDAEHELTHTVPKLTTALIHAYPAEHGSSIPDRGRTVE.

The next 5 membrane-spanning stretches (helical) occupy residues 46–66 (ISLL…VMSG), 75–95 (IHNF…ALGA), 113–133 (AGSF…YEAI), 145–165 (VGWV…VALY), and 202–222 (VALG…AAIL).

The protein belongs to the cation diffusion facilitator (CDF) transporter (TC 2.A.4) family.

The protein localises to the cell membrane. This Mycobacterium tuberculosis (strain CDC 1551 / Oshkosh) protein is Probable cation efflux system protein MT2084.